A 521-amino-acid polypeptide reads, in one-letter code: GMP synthase [glutamine-hydrolyzing] (521 aa).

Residues 8–203 (KILILDFGAQ…VVDVCGCQTL (196 aa)) enclose the Glutamine amidotransferase type-1 domain. C85 (nucleophile) is an active-site residue. Residues H177 and E179 contribute to the active site. A GMPS ATP-PPase domain is found at 204-396 (WTAANIIDDQ…LGLPRTMVYR (193 aa)). Residue 231 to 237 (SGGVDSS) coordinates ATP.

Homodimer.

The enzyme catalyses XMP + L-glutamine + ATP + H2O = GMP + L-glutamate + AMP + diphosphate + 2 H(+). It functions in the pathway purine metabolism; GMP biosynthesis; GMP from XMP (L-Gln route): step 1/1. Catalyzes the synthesis of GMP from XMP. This is GMP synthase [glutamine-hydrolyzing] from Xanthomonas campestris pv. campestris (strain B100).